The chain runs to 522 residues: Zinc finger protein C25B8.19c (522 aa).

5 disordered regions span residues M1–T25, D61–N96, Q235–T265, Q311–S386, and N413–S462. The span at A84–N96 shows a compositional bias: low complexity. Composition is skewed to polar residues over residues Q311–P321 and A335–G344. Residues N345–Q362 show a composition bias toward low complexity. Polar residues predominate over residues N413 to N427. The span at Y428 to A438 shows a compositional bias: basic and acidic residues. Residues S453–S462 are compositionally biased toward low complexity. 2 C2H2-type zinc fingers span residues Y468–P495 and F496–L522.

Its subcellular location is the nucleus. The protein is Zinc finger protein C25B8.19c of Schizosaccharomyces pombe (strain 972 / ATCC 24843) (Fission yeast).